Here is a 120-residue protein sequence, read N- to C-terminus: UPF0102 protein Daro_0503 (120 aa).

The interval 1–20 (MQVKANDTTTARGREAEDRA) is disordered.

It belongs to the UPF0102 family.

The polypeptide is UPF0102 protein Daro_0503 (Dechloromonas aromatica (strain RCB)).